Reading from the N-terminus, the 561-residue chain is Terpene synthase 3 (561 aa).

Aspartate 315, aspartate 319, aspartate 458, and glutamate 466 together coordinate Mg(2+). Positions 315–319 match the DDXXD motif motif; it reads DDVYD.

This sequence belongs to the terpene synthase family. Tpsa subfamily. The cofactor is Mg(2+). Mn(2+) is required as a cofactor. Mostly expressed in stems amd leaves, and, to a lower extent, in roots and fruits.

It catalyses the reaction (2E,6E)-farnesyl diphosphate = germacrene D + diphosphate. The catalysed reaction is (2E,6E)-farnesyl diphosphate = alpha-copaene + diphosphate. The protein operates within secondary metabolite biosynthesis; terpenoid biosynthesis. Functionally, sesquiterpene synthase involved in the biosynthesis of volatile compounds that contribute to the characteristic flavors of black pepper. Mediates the conversion of (2E,6E)-farnesyl diphosphate (FPP) into alpha-copaene and germacrene D. The polypeptide is Terpene synthase 3 (Piper nigrum (Black pepper)).